A 741-amino-acid chain; its full sequence is NAD(P)H-quinone oxidoreductase subunit 5, chloroplastic (741 aa).

A run of 15 helical transmembrane segments spans residues 9-29 (WIIP…LLLF), 40-60 (WAVP…ELAI), 89-109 (IDPL…LVLI), 125-145 (FSYL…SNLI), 147-167 (IYIF…FWFA), 185-205 (GDFG…SFEF), 219-239 (NGVN…GAVA), 258-278 (TPIS…FLVA), 280-300 (LLPL…IGVI), 327-347 (LGYI…FHLI), 396-416 (TTFF…CFWS), 425-445 (WLYS…TAFY), 547-567 (LLPL…GIPF), 606-626 (ILSV…YGSV), and 721-741 (SYIF…YFFI).

Belongs to the complex I subunit 5 family. As to quaternary structure, NDH is composed of at least 16 different subunits, 5 of which are encoded in the nucleus.

It is found in the plastid. The protein localises to the chloroplast thylakoid membrane. It carries out the reaction a plastoquinone + NADH + (n+1) H(+)(in) = a plastoquinol + NAD(+) + n H(+)(out). It catalyses the reaction a plastoquinone + NADPH + (n+1) H(+)(in) = a plastoquinol + NADP(+) + n H(+)(out). NDH shuttles electrons from NAD(P)H:plastoquinone, via FMN and iron-sulfur (Fe-S) centers, to quinones in the photosynthetic chain and possibly in a chloroplast respiratory chain. The immediate electron acceptor for the enzyme in this species is believed to be plastoquinone. Couples the redox reaction to proton translocation, and thus conserves the redox energy in a proton gradient. The polypeptide is NAD(P)H-quinone oxidoreductase subunit 5, chloroplastic (ndhF) (Ceratophyllum demersum (Rigid hornwort)).